Here is a 398-residue protein sequence, read N- to C-terminus: Phosphoglycerate kinase (398 aa).

Substrate contacts are provided by residues 21-23 (DFN), Arg-36, 59-62 (HLGR), Arg-119, and Arg-157. ATP-binding positions include Lys-208, Gly-296, Glu-327, and 354 to 357 (GGDS).

It belongs to the phosphoglycerate kinase family. Monomer.

It is found in the cytoplasm. It catalyses the reaction (2R)-3-phosphoglycerate + ATP = (2R)-3-phospho-glyceroyl phosphate + ADP. It functions in the pathway carbohydrate degradation; glycolysis; pyruvate from D-glyceraldehyde 3-phosphate: step 2/5. This chain is Phosphoglycerate kinase, found in Streptococcus mutans serotype c (strain ATCC 700610 / UA159).